The sequence spans 336 residues: GTPase Obg (336 aa).

The Obg domain maps to 1 to 159 (MKFIDEATII…RRLQLELILL (159 aa)). The region spanning 160–333 (ADVGLLGLPN…LCRDIMLFIN (174 aa)) is the OBG-type G domain. GTP is bound by residues 166–173 (GLPNVGKS), 191–195 (FTTLV), 213–216 (DIPG), 283–286 (NKLD), and 314–316 (SAM). Ser-173 and Thr-193 together coordinate Mg(2+).

The protein belongs to the TRAFAC class OBG-HflX-like GTPase superfamily. OBG GTPase family. In terms of assembly, monomer. It depends on Mg(2+) as a cofactor.

It localises to the cytoplasm. An essential GTPase which binds GTP, GDP and possibly (p)ppGpp with moderate affinity, with high nucleotide exchange rates and a fairly low GTP hydrolysis rate. Plays a role in control of the cell cycle, stress response, ribosome biogenesis and in those bacteria that undergo differentiation, in morphogenesis control. The polypeptide is GTPase Obg (Baumannia cicadellinicola subsp. Homalodisca coagulata).